The sequence spans 369 residues: uncharacterized protein (369 aa).

Lysine 184 carries the post-translational modification N6-(pyridoxal phosphate)lysine.

It belongs to the class-V pyridoxal-phosphate-dependent aminotransferase family. Pyridoxal 5'-phosphate is required as a cofactor.

This is an uncharacterized protein from Helicobacter pylori (strain ATCC 700392 / 26695) (Campylobacter pylori).